A 2055-amino-acid polypeptide reads, in one-letter code: Citron Rho-interacting kinase (2055 aa).

N-acetylmethionine is present on Met1. Residues 97 to 359 (FEVRSLVGCG…FEGLCCHPFF (263 aa)) form the Protein kinase domain. ATP contacts are provided by residues 103-111 (VGCGHFAEV) and Lys126. Asp221 functions as the Proton acceptor in the catalytic mechanism. In terms of domain architecture, AGC-kinase C-terminal spans 360 to 430 (ARTDWNNIRN…SKALGYLGRS (71 aa)). Phosphoserine is present on residues Ser432, Ser439, Ser479, and Ser581. Coiled-coil stretches lie at residues 441–1086 (AKVS…QWEA), 1091–1247 (LGDE…VLYS), and 1275–1325 (AKKK…RKAT). Residues 1132–1328 (LAVKEHKAEI…AAHRKATDHP (197 aa)) are interaction with Rho/Rac. Tyr1237 is modified (phosphotyrosine). The segment covering 1316 to 1329 (REEAAHRKATDHPH) has biased composition (basic and acidic residues). Disordered regions lie at residues 1316 to 1336 (REEA…PATA) and 1348 to 1377 (SPEH…EFSR). The segment covering 1353–1363 (PSAMSLLAPPS) has biased composition (low complexity). The segment covering 1365 to 1377 (RRKESSTPEEFSR) has biased composition (basic and acidic residues). The Phorbol-ester/DAG-type zinc finger occupies 1388 to 1437 (PHRFNVGLNMRATKCAVCLDTVHFGRQASKCLECQVMCHPKCSTCLPATC). A PH domain is found at 1469-1589 (SLHLEGWMKV…WVTALESVVA (121 aa)). The region spanning 1617–1907 (RLDMNCTLPF…RYLGPAISSG (291 aa)) is the CNH domain. Lys1747 is modified (N6-acetyllysine). The tract at residues 1932–2040 (SGTEQHRVPS…RGRLPAGAVR (109 aa)) is disordered. The segment covering 1939 to 1948 (VPSTSRSSPN) has biased composition (polar residues). Ser1966 is subject to Phosphoserine. Over residues 1974-2031 (SHPREPSTPHRYRDREGRTELRRDKSPGRPLEREKSPGRMLSTRRERSPGRLFEDSSR) the composition is skewed to basic and acidic residues. Positions 1979-1984 (PSTPHR) match the SH3-binding motif. Ser2021 is subject to Phosphoserine. Thr2041 carries the post-translational modification Phosphothreonine.

Belongs to the protein kinase superfamily. AGC Ser/Thr protein kinase family. Interacts with TTC3. Homodimer. Directly interacts with KIF14 depending on the activation state (stronger interaction with the kinase-dead form). In terms of tissue distribution, a major signal was observed in testis and brain, but it was also detected in thymus, spleen, kidney, heart and lung.

It is found in the cytoplasm. The catalysed reaction is L-seryl-[protein] + ATP = O-phospho-L-seryl-[protein] + ADP + H(+). The enzyme catalyses L-threonyl-[protein] + ATP = O-phospho-L-threonyl-[protein] + ADP + H(+). Plays a role in cytokinesis. Required for KIF14 localization to the central spindle and midbody. Probable RHO/RAC effector that binds to the GTP-bound forms of RHO and RAC1. It probably binds p21 with a tighter specificity in vivo. Displays serine/threonine protein kinase activity. Plays an important role in the regulation of cytokinesis and the development of the central nervous system. Phosphorylates MYL9/MLC2. The chain is Citron Rho-interacting kinase (Cit) from Mus musculus (Mouse).